Here is a 1193-residue protein sequence, read N- to C-terminus: uncharacterized protein (1193 aa).

An N-terminal signal peptide occupies residues 1–25 (MKIKFINYLLLFFIIFLNYNGFVKS). The Extracellular portion of the chain corresponds to 26–1172 (DCYQELDLVL…PQDPSDELST (1147 aa)). N-linked (GlcNAc...) asparagine glycosylation is found at N90, N183, N226, N265, N281, N345, N357, N436, N516, N552, N583, N627, N712, N765, N822, N938, N1038, and N1092. Residues 1173–1193 (SSFVQVNLLFLSILIFTIFIF) form a helical membrane-spanning segment.

It is found in the membrane. This is an uncharacterized protein from Dictyostelium discoideum (Social amoeba).